We begin with the raw amino-acid sequence, 347 residues long: NADH-quinone oxidoreductase subunit H (347 aa).

The next 8 membrane-spanning stretches (helical) occupy residues 13-33 (LLIL…VAYI), 82-102 (GVFL…WAVI), 115-135 (VGIL…IMGG), 161-181 (IGFV…SDIV), 198-218 (FLDW…ISAL), 248-268 (FLLF…LATI), 283-303 (FTWV…FFGI), and 321-341 (LGWK…AAFL).

Belongs to the complex I subunit 1 family. NDH-1 is composed of 14 different subunits. Subunits NuoA, H, J, K, L, M, N constitute the membrane sector of the complex.

The protein localises to the cell inner membrane. The catalysed reaction is a quinone + NADH + 5 H(+)(in) = a quinol + NAD(+) + 4 H(+)(out). NDH-1 shuttles electrons from NADH, via FMN and iron-sulfur (Fe-S) centers, to quinones in the respiratory chain. The immediate electron acceptor for the enzyme in this species is believed to be ubiquinone. Couples the redox reaction to proton translocation (for every two electrons transferred, four hydrogen ions are translocated across the cytoplasmic membrane), and thus conserves the redox energy in a proton gradient. This subunit may bind ubiquinone. In Mesorhizobium japonicum (strain LMG 29417 / CECT 9101 / MAFF 303099) (Mesorhizobium loti (strain MAFF 303099)), this protein is NADH-quinone oxidoreductase subunit H.